The chain runs to 115 residues: Nitrogenase-stabilizing/protective protein NifW (115 aa).

The protein belongs to the NifW family. As to quaternary structure, homotrimer; associates with NifD.

May protect the nitrogenase Fe-Mo protein from oxidative damage. The sequence is that of Nitrogenase-stabilizing/protective protein NifW from Azotobacter vinelandii (strain DJ / ATCC BAA-1303).